The primary structure comprises 303 residues: Glycine--tRNA ligase alpha subunit (303 aa).

It belongs to the class-II aminoacyl-tRNA synthetase family. Tetramer of two alpha and two beta subunits.

The protein resides in the cytoplasm. The catalysed reaction is tRNA(Gly) + glycine + ATP = glycyl-tRNA(Gly) + AMP + diphosphate. This is Glycine--tRNA ligase alpha subunit from Stenotrophomonas maltophilia (strain R551-3).